A 192-amino-acid polypeptide reads, in one-letter code: uncharacterized protein (192 aa).

Residues 29–160 (HRQAAVLIPI…PLDIYRRGDS (132 aa)) enclose the Nudix hydrolase domain. Residues 67–89 (GAVDDTDASVIAAALREAEEEVA) carry the Nudix box motif. Mg(2+) is bound by residues E83 and E87.

This sequence belongs to the Nudix hydrolase family. PCD1 subfamily. Requires Mn(2+) as cofactor. The cofactor is Mg(2+).

In terms of biological role, probably mediates the hydrolysis of some nucleoside diphosphate derivatives. This is an uncharacterized protein from Shigella boydii serotype 4 (strain Sb227).